The primary structure comprises 404 residues: Cysteine desulfurase IscS (404 aa).

Pyridoxal 5'-phosphate is bound by residues A75 to T76, N155, Q183, and S203 to H205. K206 bears the N6-(pyridoxal phosphate)lysine mark. T243 contacts pyridoxal 5'-phosphate. The active-site Cysteine persulfide intermediate is the C328. C328 contributes to the [2Fe-2S] cluster binding site.

This sequence belongs to the class-V pyridoxal-phosphate-dependent aminotransferase family. NifS/IscS subfamily. As to quaternary structure, homodimer. Forms a heterotetramer with IscU, probably interacts with other sulfur acceptors. Pyridoxal 5'-phosphate is required as a cofactor.

It is found in the cytoplasm. The enzyme catalyses (sulfur carrier)-H + L-cysteine = (sulfur carrier)-SH + L-alanine. Its pathway is cofactor biosynthesis; iron-sulfur cluster biosynthesis. Inhibited by equimolar N-iodoacetyl-N'-(5-sulfo-1-naphthyl)ethylenediamine. Functionally, master enzyme that delivers sulfur to a number of partners involved in Fe-S cluster assembly, tRNA modification or cofactor biosynthesis. Catalyzes the removal of elemental sulfur from cysteine to produce alanine via an enzyme-bound persulfide intermediate. Functions as a sulfur delivery protein for Fe-S cluster synthesis. Cluster assembly on IscU homodimers proceeds sequentially from 1 2Fe-2S per dimer, to 2 2Fe-2S per dimer and finally 1 4Fe-4S per dimer. This chain is Cysteine desulfurase IscS, found in Azotobacter vinelandii.